The primary structure comprises 435 residues: Serine--tRNA ligase (435 aa).

Positions 41–70 (QVKTEELQAQRNSRSKSIGQAKAKGDHEEA) are disordered. Residues 49–58 (AQRNSRSKSI) are compositionally biased toward polar residues. L-serine is bound at residue 242-244 (TAE). Residue 273-275 (RSE) coordinates ATP. E296 provides a ligand contact to L-serine. ATP is bound at residue 360–363 (EISS). Residue S396 participates in L-serine binding.

This sequence belongs to the class-II aminoacyl-tRNA synthetase family. Type-1 seryl-tRNA synthetase subfamily. As to quaternary structure, homodimer. The tRNA molecule binds across the dimer.

The protein localises to the cytoplasm. It catalyses the reaction tRNA(Ser) + L-serine + ATP = L-seryl-tRNA(Ser) + AMP + diphosphate + H(+). The catalysed reaction is tRNA(Sec) + L-serine + ATP = L-seryl-tRNA(Sec) + AMP + diphosphate + H(+). It participates in aminoacyl-tRNA biosynthesis; selenocysteinyl-tRNA(Sec) biosynthesis; L-seryl-tRNA(Sec) from L-serine and tRNA(Sec): step 1/1. Functionally, catalyzes the attachment of serine to tRNA(Ser). Is also able to aminoacylate tRNA(Sec) with serine, to form the misacylated tRNA L-seryl-tRNA(Sec), which will be further converted into selenocysteinyl-tRNA(Sec). The protein is Serine--tRNA ligase of Aliivibrio fischeri (strain MJ11) (Vibrio fischeri).